We begin with the raw amino-acid sequence, 503 residues long: Excitatory amino acid transporter (503 aa).

Residues 1–18 (MPPDTRINKEIMVSWIRK) are Cytoplasmic-facing. The next 3 membrane-spanning stretches (helical) occupy residues 19–39 (NLLL…GFLL), 59–79 (LMHM…ISGL), and 96–116 (TYYM…VLVI). Residues 117–198 (HPGDPTIKKE…SLDYVKASVE (82 aa)) are Extracellular-facing. Asn-177 and Asn-187 each carry an N-linked (GlcNAc...) asparagine glycan. The next 5 helical transmembrane spans lie at 199-219 (YTSG…GISL), 239-259 (VIMK…FCLI), 281-301 (VTVL…IFFV), 369-389 (AVAA…GQVV), and 400-420 (IGAA…LTAV).

It belongs to the dicarboxylate/amino acid:cation symporter (DAACS) (TC 2.A.23) family.

The protein resides in the membrane. Its function is as follows. Transports L-glutamate and also L- and D-aspartate. Essential for terminating the postsynaptic action of glutamate by rapidly removing released glutamate from the synaptic cleft. Acts as a symport by cotransporting sodium. The sequence is that of Excitatory amino acid transporter (glt-1) from Caenorhabditis elegans.